The chain runs to 599 residues: Serine hydroxymethyltransferase 6 (599 aa).

Positions 1–25 (MDRIAQSDLSLGFGSSHALPLPHPP) are disordered. N6-(pyridoxal phosphate)lysine is present on Lys-374.

This sequence belongs to the SHMT family. Homotetramer. Pyridoxal 5'-phosphate is required as a cofactor.

The protein resides in the cytoplasm. It carries out the reaction (6R)-5,10-methylene-5,6,7,8-tetrahydrofolate + glycine + H2O = (6S)-5,6,7,8-tetrahydrofolate + L-serine. It functions in the pathway one-carbon metabolism; tetrahydrofolate interconversion. Functionally, catalyzes the interconversion of serine and glycine. The chain is Serine hydroxymethyltransferase 6 (SHM6) from Arabidopsis thaliana (Mouse-ear cress).